A 567-amino-acid chain; its full sequence is Fanconi anemia group C protein homolog (567 aa).

In terms of assembly, belongs to the multisubunit FA complex composed of FANCA, FANCB, FANCC, FANCE, FANCF, FANCG, FANCL/PHF9 and FANCM. This complex may also include HSP70. Interacts with ZBTB32. Upon IFNG induction, interacts with STAT1. Interacts with CDK1. Interacts with EIF2AK2.

It localises to the nucleus. The protein localises to the cytoplasm. In terms of biological role, DNA repair protein that may operate in a postreplication repair or a cell cycle checkpoint function. May be implicated in interstrand DNA cross-link repair and in the maintenance of normal chromosome stability. Upon IFNG induction, may facilitate STAT1 activation by recruiting STAT1 to IFNGR1. The chain is Fanconi anemia group C protein homolog (FANCC) from Bos taurus (Bovine).